The chain runs to 1029 residues: Multiple C2 domain and transmembrane region protein 6 (1029 aa).

The C2 1 domain occupies 1-111 (MNKLVVEIVD…SGVQRYPLDK (111 aa)). The segment at 187–224 (TKKKEKESRTFHSIGAHAGGGGGAPPMSQAKQAYPPPP) is disordered. 3 consecutive C2 domains span residues 277–398 (RSSG…PQWY), 437–562 (RVSH…PRWF), and 605–727 (FSSD…THFY). 5 residues coordinate Ca(2+): Asp310, Asp316, Asp363, Asp365, and Asp371. 2 consecutive transmembrane segments (helical) span residues 864–884 (LILVCYPELILPTVFLYLFVI) and 976–996 (FALIWAVFIYVTPFQVIAIII).

The protein belongs to the MCTP family. The cofactor is Ca(2+). Expressed in the vascular tissues of cotyledons and rosette leaves. Accumulates in roots caps and shoot apical meristems (SAMs). Observed in flowers.

It localises to the cell membrane. The protein resides in the cytoplasm. It is found in the endosome membrane. Functionally, regulates flowering time under long days. May function as a signaling molecule by regulating the trafficking of other regulators. This is Multiple C2 domain and transmembrane region protein 6 from Arabidopsis thaliana (Mouse-ear cress).